The sequence spans 229 residues: Histone H3-like centromeric protein CSE4 (229 aa).

Residues 1-35 (MSSKQQWVSSAIQSDSSGRSLSNVNRLAGDQQSIN) are compositionally biased toward polar residues. Residues 1 to 78 (MSSKQQWVSS…DIETDYEDQA (78 aa)) are disordered. Residues 53-68 (PRREERRRYESSKSDL) are compositionally biased toward basic and acidic residues. The Nuclear localization signal motif lies at 115-132 (KRREKQRKQSLKRVEKKY). Residues 132 to 229 (YTPSELALYE…LARRIRGQFI (98 aa)) form an H3-like region.

This sequence belongs to the histone H3 family. As to quaternary structure, component of centromeric nucleosomes, where DNA is wrapped around a histone octamer core. The octamer contains two molecules each of H2A, H2B, CSE4/CENPA and H4 assembled in one CSE4-H4 heterotetramer and two H2A-H2B heterodimers. Interacts with the inner kinetochore. Interacts with the central kinetochore protein CTF19. Interacts with YTA7. Ubiquitinated. Is degraded through ubiquitin-mediated proteolysis when not protected by its association to the kinetochore.

It is found in the nucleus. The protein localises to the chromosome. The protein resides in the centromere. Histone H3-like nucleosomal protein that is specifically found in centromeric nucleosomes. Replaces conventional H3 in the nucleosome core of centromeric chromatin that serves as an assembly site for the inner kinetochore. Required for recruitment and assembly of kinetochore proteins, mitotic progression and chromosome segregation. May serve as an epigenetic mark that propagates centromere identity through replication and cell division. Required for functional chromatin architecture at the yeast 2-micron circle partitioning locus and promotes equal plasmid segregation. In Saccharomyces cerevisiae (strain ATCC 204508 / S288c) (Baker's yeast), this protein is Histone H3-like centromeric protein CSE4 (CSE4).